The following is a 469-amino-acid chain: Programmed cell death protein 4 (469 aa).

An N-acetylmethionine modification is found at methionine 1. 2 disordered regions span residues 1–38 and 58–128; these read MDVE…EIKN and KAKR…GTPG. A Phosphoserine modification is found at serine 25. Positions 58 to 64 match the Nuclear localization signal motif; the sequence is KAKRRLR. Position 67 is a phosphoserine; by PKB and RPS6KB1 (serine 67). Phosphoserine occurs at positions 68, 71, 76, and 78. A Phosphodegron motif is present at residues 70–76; the sequence is DSGRGDS. Residues 74–83 show a composition bias toward low complexity; it reads GDSVSDNGSD. Residues 84–93 show a composition bias toward polar residues; it reads TLRSGVTVPT. Residue serine 94 is modified to Phosphoserine. The span at 114–125 shows a compositional bias: gly residues; that stretch reads KKGGAGGKGVWG. Position 152 is a phosphotyrosine (tyrosine 152). Positions 163–284 constitute an MI 1 domain; that stretch reads AFEKTLTPII…CNTYIDSYKG (122 aa). Phosphoserine is present on residues serine 313 and serine 317. The MI 2 domain occupies 326 to 449; sequence HLVKEIDMLL…SKQLRDLCPS (124 aa). The short motif at 448-454 is the Nuclear localization signal element; the sequence is PSRGRKR. Serine 457 carries the phosphoserine; by PKB modification.

Belongs to the PDCD4 family. Interacts (via MI domains) with EIF4A2. Interacts (via MI domains) with EIF4A1 (via N-terminal domain). Heterotrimer with EIF4A1; one molecule of PDCD4 binds two molecules of EIF4A1. Interacts with EIF4G1. May form a complex with EIF4A1 and EIF4G1. The interaction between PDCD4 and EIF4A1 interferes with the interaction between EIF4A1 and EIF4G. When phosphorylated, interacts with BTRC and FBXW11. Post-translationally, polyubiquitinated, leading to its proteasomal degradation. Rapidly degraded in response to mitogens. Phosphorylation of the phosphodegron promotes interaction with BTRC and proteasomal degradation. Phosphorylated at Ser-67 by RPS6KB1 in response to mitogens; phosphorylation promotes proteasomal degradation of PDCD4.

The protein localises to the nucleus. It is found in the cytoplasm. Its function is as follows. Inhibits translation initiation and cap-dependent translation. May excert its function by hindering the interaction between EIF4A1 and EIF4G. Inhibits the helicase activity of EIF4A. Modulates the activation of JUN kinase. Down-regulates the expression of MAP4K1, thus inhibiting events important in driving invasion, namely, MAPK85 activation and consequent JUN-dependent transcription. May play a role in apoptosis. Tumor suppressor. Inhibits tumor promoter-induced neoplastic transformation. Binds RNA. The polypeptide is Programmed cell death protein 4 (PDCD4) (Pongo abelii (Sumatran orangutan)).